Here is a 152-residue protein sequence, read N- to C-terminus: UPF0178 protein YaiI (152 aa).

It belongs to the UPF0178 family.

This Escherichia coli O6:K15:H31 (strain 536 / UPEC) protein is UPF0178 protein YaiI.